Here is a 57-residue protein sequence, read N- to C-terminus: Small ribosomal subunit protein bS21 (57 aa).

Belongs to the bacterial ribosomal protein bS21 family.

The sequence is that of Small ribosomal subunit protein bS21 from Geobacillus kaustophilus (strain HTA426).